The primary structure comprises 224 residues: Claudin-19 (224 aa).

Over 1 to 7 the chain is Cytoplasmic; the sequence is MANSGLQ. Residues 8–28 traverse the membrane as a helical segment; sequence LLGYFLALGGWVGIIASTALP. Over 29–81 the chain is Extracellular; it reads QWKQSSYAGDAIITAVGLYEGLWMSCASQSTGQVQCKLYDSLLALDGHIQSAR. Cysteines 54 and 64 form a disulfide. Residues 82-102 traverse the membrane as a helical segment; the sequence is ALMVVAVLLGFVAMVLSVVGM. Topologically, residues 103-117 are cytoplasmic; that stretch reads KCTRVGDSNPTAKGR. Residues 118–138 form a helical membrane-spanning segment; sequence VAISGGALFLLAGLCTLTAVS. Residues 139–160 are Extracellular-facing; the sequence is WYATLVTQEFFNPSTPVNARYE. A helical transmembrane segment spans residues 161-181; it reads FGPALFVGWASAGLAILGGSF. Residues 182–224 are Cytoplasmic-facing; it reads LCCTCPEPERANSIPQPYRSGPSTAAREPVVKLSTSVKGPLGV.

Belongs to the claudin family. As to quaternary structure, can form homo- and heteropolymeric tight junction strands. Interacts with other claudins including CLDN3, CLDN10, CLDN16 and CLDN18 with highest affinity for CLDN16. Interacts (via PDZ-binding motif TRV) with TJP1 (via PDZ domain).

It is found in the cell junction. It localises to the tight junction. Its subcellular location is the cell membrane. The catalysed reaction is Mg(2+)(in) = Mg(2+)(out). It catalyses the reaction Ca(2+)(in) = Ca(2+)(out). The enzyme catalyses Na(+)(in) = Na(+)(out). It carries out the reaction K(+)(in) = K(+)(out). The catalysed reaction is Rb(+)(in) = Rb(+)(out). It catalyses the reaction Cs(+)(in) = Cs(+)(out). The enzyme catalyses Li(+)(in) = Li(+)(out). Forms paracellular channels: coassembles with CLDN16 into tight junction strands with cation-selective channels through the strands, conveying epithelial permeability in a process known as paracellular tight junction permeability. Involved in the maintenance of ion gradients along the nephron. In the thick ascending limb (TAL) of Henle's loop, facilitates sodium paracellular permeability from the interstitial compartment to the lumen, contributing to the lumen-positive transepithelial potential that drives paracellular magnesium and calcium reabsorption. Forms paracellular barriers on its own. In the peripheral nervous system, represents a major constituent of the tight junctions in Schwann cells and contributes to electrical sealing. During retinal neurogenesis, may regulate the barrier properties of tight junctions in retinal pigment epithelium, required for proper retinal tissue differentiation and vision. The sequence is that of Claudin-19 from Rattus norvegicus (Rat).